Here is a 244-residue protein sequence, read N- to C-terminus: Probable transcriptional regulatory protein Xfasm12_1059 (244 aa).

This sequence belongs to the TACO1 family.

It is found in the cytoplasm. This chain is Probable transcriptional regulatory protein Xfasm12_1059, found in Xylella fastidiosa (strain M12).